Reading from the N-terminus, the 198-residue chain is Shikimate kinase (198 aa).

Residue 26–31 (GSGKSQ) coordinates ATP. Ser30 provides a ligand contact to Mg(2+). Residues Asp48, Arg72, and Gly94 each contribute to the substrate site. ATP is bound at residue Arg132. Arg151 is a substrate binding site. Gln167 contacts ATP.

This sequence belongs to the shikimate kinase family. As to quaternary structure, monomer. Mg(2+) is required as a cofactor.

Its subcellular location is the cytoplasm. It catalyses the reaction shikimate + ATP = 3-phosphoshikimate + ADP + H(+). The protein operates within metabolic intermediate biosynthesis; chorismate biosynthesis; chorismate from D-erythrose 4-phosphate and phosphoenolpyruvate: step 5/7. In terms of biological role, catalyzes the specific phosphorylation of the 3-hydroxyl group of shikimic acid using ATP as a cosubstrate. This Prochlorococcus marinus (strain NATL2A) protein is Shikimate kinase.